The primary structure comprises 568 residues: Pentatricopeptide repeat-containing protein At1g73400, mitochondrial (568 aa).

The transit peptide at 1-55 (MMRRLVSYFVRSRFSLHLSTTPPQRSALFSHILSSHLDSIQINKKISSFSVHRFC) directs the protein to the mitochondrion. PPR repeat units lie at residues 233–263 (EINA…MRHR), 267–301 (DANT…GHKP), 302–336 (ENFT…GSAV), 340–374 (TAKT…GCLP), 375–409 (DVST…GYPP), 410–444 (DIVT…RCAP), 445–479 (SVQT…DCVQ), and 480–514 (DVET…GLKL).

It belongs to the PPR family. P subfamily.

The protein localises to the mitochondrion. This is Pentatricopeptide repeat-containing protein At1g73400, mitochondrial from Arabidopsis thaliana (Mouse-ear cress).